We begin with the raw amino-acid sequence, 202 residues long: Na(+)-translocating NADH-quinone reductase subunit E (202 aa).

The next 6 helical transmembrane spans lie at 11–31 (SVFIENMALSFFLGMCTFLAV), 35–55 (VTTAMGLGVAVIVVLAISVPA), 79–99 (LSFLKFITFIGVIAALVQILE), 114–134 (GIFLPLITVNCAIFGAVAFMV), 144–164 (LVFGVGSGIGWALAIVLLAAV), and 180–200 (LGITFISAGLMALGFMSFSGV).

It belongs to the NqrDE/RnfAE family. As to quaternary structure, composed of six subunits; NqrA, NqrB, NqrC, NqrD, NqrE and NqrF.

It localises to the cell inner membrane. The catalysed reaction is a ubiquinone + n Na(+)(in) + NADH + H(+) = a ubiquinol + n Na(+)(out) + NAD(+). Its function is as follows. NQR complex catalyzes the reduction of ubiquinone-1 to ubiquinol by two successive reactions, coupled with the transport of Na(+) ions from the cytoplasm to the periplasm. NqrA to NqrE are probably involved in the second step, the conversion of ubisemiquinone to ubiquinol. In Shewanella denitrificans (strain OS217 / ATCC BAA-1090 / DSM 15013), this protein is Na(+)-translocating NADH-quinone reductase subunit E.